We begin with the raw amino-acid sequence, 1150 residues long: DNA polymerase (1150 aa).

The interval 1–53 (MSLVQGHGTSGLFTEPPNPINQQESSGPSLPAQDAAQAFASSPRAGATSTIVN) is disordered.

It belongs to the DNA polymerase type-B family. Heterodimer with the terminal protein; this heterodimer binds to bp 9 to 18 of the genome. Forms a complex with viral pTP, DBP and hosts NFIA and POU2F1/OCT1 for initiation of replication.

It is found in the host nucleus. It catalyses the reaction DNA(n) + a 2'-deoxyribonucleoside 5'-triphosphate = DNA(n+1) + diphosphate. Its function is as follows. Eukaryotic-type DNA polymerase involved in viral genomic replication. DNA synthesis is protein primed, and acts in a strand displacement replication. Assembles in complex with viral pTP, DBP, host NFIA and host POU2F1/OCT1 on viral origin of replication. The polymerase covalently transfers dCMP onto pTP, thereby initiating complementary strand synthesis. This is DNA polymerase from Canis lupus familiaris (Dog).